The chain runs to 140 residues: Nucleoside diphosphate kinase (140 aa).

Positions 11, 59, 87, 93, 104, and 114 each coordinate ATP. Residue H117 is the Pros-phosphohistidine intermediate of the active site.

Belongs to the NDK family. Homotetramer. Requires Mg(2+) as cofactor.

It is found in the cytoplasm. It carries out the reaction a 2'-deoxyribonucleoside 5'-diphosphate + ATP = a 2'-deoxyribonucleoside 5'-triphosphate + ADP. The enzyme catalyses a ribonucleoside 5'-diphosphate + ATP = a ribonucleoside 5'-triphosphate + ADP. Functionally, major role in the synthesis of nucleoside triphosphates other than ATP. The ATP gamma phosphate is transferred to the NDP beta phosphate via a ping-pong mechanism, using a phosphorylated active-site intermediate. The polypeptide is Nucleoside diphosphate kinase (Rhodopseudomonas palustris (strain BisB18)).